The chain runs to 525 residues: Cobyric acid synthase (525 aa).

In terms of domain architecture, GATase cobBQ-type spans 251–452 (ELEIAVLYLP…FHGIFDNDLL (202 aa)). The active-site Nucleophile is the Cys-332. His-444 is an active-site residue.

The protein belongs to the CobB/CobQ family. CobQ subfamily.

The protein operates within cofactor biosynthesis; adenosylcobalamin biosynthesis. Functionally, catalyzes amidations at positions B, D, E, and G on adenosylcobyrinic A,C-diamide. NH(2) groups are provided by glutamine, and one molecule of ATP is hydrogenolyzed for each amidation. In Pelotomaculum thermopropionicum (strain DSM 13744 / JCM 10971 / SI), this protein is Cobyric acid synthase.